The chain runs to 400 residues: Phosphoglycerate kinase (400 aa).

Substrate contacts are provided by residues 24–26 (DFN), Arg-40, 63–66 (HFGR), Arg-121, and Arg-154. ATP contacts are provided by residues Lys-205, Gly-296, Glu-327, and 356–359 (GGDS).

This sequence belongs to the phosphoglycerate kinase family. In terms of assembly, monomer.

The protein resides in the cytoplasm. It catalyses the reaction (2R)-3-phosphoglycerate + ATP = (2R)-3-phospho-glyceroyl phosphate + ADP. Its pathway is carbohydrate degradation; glycolysis; pyruvate from D-glyceraldehyde 3-phosphate: step 2/5. The sequence is that of Phosphoglycerate kinase from Thermosynechococcus vestitus (strain NIES-2133 / IAM M-273 / BP-1).